The primary structure comprises 310 residues: MDPQNYSLVSEFVLHGLCTSRHLQNFFFIFFFGVYVAIMLGNLLILVTVISDPCLHSSPMYFLLGNLAFLDMWLASFATPKMIRDFLSDQKLISFGGCMAQIFFLHFTGGAEMVLLVSMAYDRYVAICKPLHYMTLMSWQTCIRLVLASWVVGFVHSISQVAFTVNLPYCGPNEVDSFFCDLPLVIKLACMDTYVLGIIMISDSGLLSLSCFLLLLISYTVILLAIRQRAAGSTSKALSTCSAHIMVVTLFFGPCIFVYVRPFSRFSVDKLLSVFYTIFTPLLNPIIYTLRNEEMKAAMKKLQNRRVTFQ.

Topologically, residues 1-25 (MDPQNYSLVSEFVLHGLCTSRHLQN) are extracellular. Asn5 carries an N-linked (GlcNAc...) asparagine glycan. Residues 26–49 (FFFIFFFGVYVAIMLGNLLILVTV) traverse the membrane as a helical segment. Residues 50 to 58 (ISDPCLHSS) lie on the Cytoplasmic side of the membrane. The chain crosses the membrane as a helical span at residues 59–80 (PMYFLLGNLAFLDMWLASFATP). Residues 81–101 (KMIRDFLSDQKLISFGGCMAQ) lie on the Extracellular side of the membrane. Residues Cys98 and Cys190 are joined by a disulfide bond. A helical membrane pass occupies residues 102 to 121 (IFFLHFTGGAEMVLLVSMAY). Residues 122 to 140 (DRYVAICKPLHYMTLMSWQ) lie on the Cytoplasmic side of the membrane. Residues 141 to 159 (TCIRLVLASWVVGFVHSIS) form a helical membrane-spanning segment. Topologically, residues 160–196 (QVAFTVNLPYCGPNEVDSFFCDLPLVIKLACMDTYVL) are extracellular. A helical transmembrane segment spans residues 197-220 (GIIMISDSGLLSLSCFLLLLISYT). At 221 to 236 (VILLAIRQRAAGSTSK) the chain is on the cytoplasmic side. Residues 237–259 (ALSTCSAHIMVVTLFFGPCIFVY) form a helical membrane-spanning segment. The Extracellular segment spans residues 260–270 (VRPFSRFSVDK). Residues 271-290 (LLSVFYTIFTPLLNPIIYTL) form a helical membrane-spanning segment. Topologically, residues 291–310 (RNEEMKAAMKKLQNRRVTFQ) are cytoplasmic.

This sequence belongs to the G-protein coupled receptor 1 family.

The protein resides in the cell membrane. In terms of biological role, odorant receptor. The chain is Olfactory receptor 4K14 (OR4K14) from Homo sapiens (Human).